The following is a 393-amino-acid chain: NAD(P)H-quinone oxidoreductase subunit H, chloroplastic (393 aa).

It belongs to the complex I 49 kDa subunit family. NDH is composed of at least 16 different subunits, 5 of which are encoded in the nucleus.

The protein resides in the plastid. Its subcellular location is the chloroplast thylakoid membrane. It catalyses the reaction a plastoquinone + NADH + (n+1) H(+)(in) = a plastoquinol + NAD(+) + n H(+)(out). The catalysed reaction is a plastoquinone + NADPH + (n+1) H(+)(in) = a plastoquinol + NADP(+) + n H(+)(out). Its function is as follows. NDH shuttles electrons from NAD(P)H:plastoquinone, via FMN and iron-sulfur (Fe-S) centers, to quinones in the photosynthetic chain and possibly in a chloroplast respiratory chain. The immediate electron acceptor for the enzyme in this species is believed to be plastoquinone. Couples the redox reaction to proton translocation, and thus conserves the redox energy in a proton gradient. The sequence is that of NAD(P)H-quinone oxidoreductase subunit H, chloroplastic from Zygnema circumcarinatum (Green alga).